The sequence spans 259 residues: AM-toxin biosynthesis protein 11 (259 aa).

The segment at 39–66 (RRSRRRPEEESIQSLSKHVSTTTQPCPT) is disordered. Positions 50-64 (IQSLSKHVSTTTQPC) are enriched in polar residues.

It functions in the pathway mycotoxin biosynthesis. Functionally, part of the gene clusters that mediate the biosynthesis of AM-toxins, host-selective toxins (HSTs) causing Alternaria blotch on apple, a worldwide distributed disease. AM-toxins are cyclic depsipeptides containing the 3 residues 2-hydroxy-isovaleric acid (2-HIV), dehydroalanine, L-alanine which are common for all 3 AM-toxins I to III. The fourth precursor is L-alpha-amino-methoxyphenyl-valeric acid (L-Amv) for AM-toxin I, L-alpha-amino-phenyl-valeric acid (L-Apv) for AM-toxin II, and L-alpha-amino-hydroxyphenyl-valeric acid (L-Ahv) for AM-toxin III. AM-toxins have two target sites for affecting susceptible apple cells; they cause invagination of the plasma membrane and electrolyte loss and chloroplast disorganization. The non-ribosomal peptide synthetase AMT1 contains 4 catalytic modules and is responsible for activation of each residue in AM-toxin. The aldo-keto reductase AMT2 catalyzes the conversion of 2-keto-isovaleric acid (2-KIV) to 2-hydroxy-isovaleric acid (2-HIV), one of the precursor residues incorporated by AMT1 during AM-toxin biosynthesis, by reduction of its ketone to an alcohol. The cytochrome P450 monooxygenase AMT3 and the thioesterase AMT4 are also important for AM-toxin production, but their exact function within the AM-toxin biosynthesis are not known yet. Up to 21 proteins (including AMT1 to AMT4) are predicted to be involved in AM-toxin biosynthesis since their expression ishighly up-regulated in AM-toxin-producing cultures. This Alternaria alternata (Alternaria rot fungus) protein is AM-toxin biosynthesis protein 11.